Here is a 1222-residue protein sequence, read N- to C-terminus: BOS complex subunit NOMO1 (1222 aa).

An N-terminal signal peptide occupies residues 1-31 (MLVGQGAGPLGPAVVTAAVVLLLSGVGPAHG). Topologically, residues 32 to 1155 (SEDIVVGCGG…NPTRKLPEQD (1124 aa)) are extracellular. N-linked (GlcNAc...) asparagine glycosylation is found at Asn50, Asn218, and Asn618. A helical membrane pass occupies residues 1156-1176 (IAQGSYIALPLTLLVLLAGYN). Over 1177-1222 (HDKLIPLLLQLTSRLQGVRALGQAASDNSGPEDAKRQAKKQKTRRT) the chain is Cytoplasmic. The disordered stretch occupies residues 1198–1222 (GQAASDNSGPEDAKRQAKKQKTRRT). The residue at position 1205 (Ser1205) is a Phosphoserine. A compositionally biased stretch (basic residues) spans 1213–1222 (QAKKQKTRRT).

Component of the back of Sec61 (BOS) complex, composed of NCLN/Nicalin, NOMO (NOMO1, NOMO2 or NOMO3) and TMEM147. The BOS complex is part of the multi-pass translocon (MPT) complex, composed of three subcomplexes, the GEL complex (composed of RAB5IF/OPTI and TMCO1), the BOS complex (composed of NCLN/Nicalin, NOMO and TMEM147) and the PAT complex (composed of WDR83OS/Asterix and CCDC47). The MPT complex associates with the SEC61 complex. Due to the strong similarity between NOMO1, NOMO2 and NOMO3, similar interaction pattern probably occur for the three gene copies. As to expression, expressed in colon tumor tissue and in adjacent normal colonic mucosa.

It is found in the endoplasmic reticulum membrane. Its function is as follows. Component of the multi-pass translocon (MPT) complex that mediates insertion of multi-pass membrane proteins into the lipid bilayer of membranes. The MPT complex takes over after the SEC61 complex: following membrane insertion of the first few transmembrane segments of proteins by the SEC61 complex, the MPT complex occludes the lateral gate of the SEC61 complex to promote insertion of subsequent transmembrane regions. The polypeptide is BOS complex subunit NOMO1 (NOMO1) (Homo sapiens (Human)).